Reading from the N-terminus, the 349-residue chain is Heme A synthase (349 aa).

5 helical membrane-spanning segments follow: residues 15–35 (AVQVWLYAVAALIVLMVVVGG), 101–121 (LLGRVIGLAFFLPFLYFALTG), 132–152 (FGLFLLGGLQGAVGWWMVASG), 162–182 (YRLAVHLTLACIILTAIVAVA), and 203–223 (VLVGLVLLQIFAGGLVAGLDA). A heme-binding site is contributed by H265. 3 consecutive transmembrane segments (helical) span residues 268–288 (IAYLIFALAFLHLLDCLRLGG), 296–316 (LVFALVAAQAMLGILTLVHMV), and 317–337 (PLDLALAHQLGATLVLIAAMI). H324 contacts heme.

The protein belongs to the COX15/CtaA family. Type 2 subfamily. Interacts with CtaB. Requires heme b as cofactor.

It is found in the cell membrane. The catalysed reaction is Fe(II)-heme o + 2 A + H2O = Fe(II)-heme a + 2 AH2. It functions in the pathway porphyrin-containing compound metabolism; heme A biosynthesis; heme A from heme O: step 1/1. Catalyzes the conversion of heme O to heme A by two successive hydroxylations of the methyl group at C8. The first hydroxylation forms heme I, the second hydroxylation results in an unstable dihydroxymethyl group, which spontaneously dehydrates, resulting in the formyl group of heme A. This chain is Heme A synthase, found in Azorhizobium caulinodans (strain ATCC 43989 / DSM 5975 / JCM 20966 / LMG 6465 / NBRC 14845 / NCIMB 13405 / ORS 571).